The primary structure comprises 525 residues: MTENIHKHRILILDFGSQYTQLVARRVRELGVYCELWAWDVTEAQIRDFNPSGIILSGGPESTTEENSPRAPQYVFEAGVPVFGICYGMQTMAMQLGGHVEASNEREFGYAQVEVVNDSALVRGIEDALTADGKPLLDVWMSHGDKVTAIPSDFITVASTESCPFAIMANEEKRFYGVQFHPEVTHTRQGMRMLERFVRDICQCEALWTPAKIIDDAVARIREQVGDDKVILGLSGGVDSSVTAMLLHRAIGKNLTCVFVDNGLLRLNEAEQVLDMFGDHFGLNIVHVPAEDRFLSALAGENDPEAKRKIIGRVFVEVFDEEALKLEDVKWLAQGTIYPDVIESAASATGKAHVIKSHHNVGGLPKEMKMGLVEPLKELFKDEVRKIGLELGLPYDMLYRHPFPGPGLGVRVLGEVKKEYCDLLRRADAIFIEELRKADLYDKVSQAFTVFLPVRSVGVMGDGRKYDWVVSLRAVETIDFMTAHWAHLPYDFLGRVSNRIINEVNGISRVVYDISGKPPATIEWE.

Residues 9–207 (RILILDFGSQ…VRDICQCEAL (199 aa)) enclose the Glutamine amidotransferase type-1 domain. The active-site Nucleophile is the cysteine 86. Residues histidine 181 and glutamate 183 contribute to the active site. The 193-residue stretch at 208–400 (WTPAKIIDDA…LGLPYDMLYR (193 aa)) folds into the GMPS ATP-PPase domain. 235–241 (SGGVDSS) contacts ATP.

As to quaternary structure, homodimer.

The catalysed reaction is XMP + L-glutamine + ATP + H2O = GMP + L-glutamate + AMP + diphosphate + 2 H(+). It functions in the pathway purine metabolism; GMP biosynthesis; GMP from XMP (L-Gln route): step 1/1. In terms of biological role, catalyzes the synthesis of GMP from XMP. The sequence is that of GMP synthase [glutamine-hydrolyzing] from Escherichia fergusonii (strain ATCC 35469 / DSM 13698 / CCUG 18766 / IAM 14443 / JCM 21226 / LMG 7866 / NBRC 102419 / NCTC 12128 / CDC 0568-73).